The sequence spans 223 residues: Adenylate kinase 4, mitochondrial (223 aa).

A ribonucleoside 5'-triphosphate is bound at residue 15–20 (GSGKGT). Residues 35-64 (SSGHFLRENIKASTEVGEMAKQYIEKSLLV) form an NMP region. AMP-binding residues include S36 and R41. An N6-succinyllysine modification is found at K60. Residues 62 to 64 (LLV), 89 to 92 (GFPR), and Q96 each bind AMP. Residues 125–162 (RRWIHPPSGRVYNLDFNPPHVHGIDDVTGEPLVQQEDD) form an LID region. Residues R126 and 135–136 (VY) each bind a ribonucleoside 5'-triphosphate. R170 contacts AMP. Position 175 is an N6-acetyllysine (K175). Residues K179 and K186 each carry the N6-acetyllysine; alternate modification. N6-succinyllysine; alternate is present on residues K179 and K186. A ribonucleoside 5'-triphosphate is bound at residue T199.

This sequence belongs to the adenylate kinase family. AK3 subfamily. In terms of assembly, monomer. Interacts with SLC25A5/ANT2. Highly expressed in kidney, moderately expressed in heart and liver and weakly expressed in brain.

The protein localises to the mitochondrion matrix. It catalyses the reaction a ribonucleoside 5'-phosphate + ATP = a ribonucleoside 5'-diphosphate + ADP. The catalysed reaction is AMP + ATP = 2 ADP. It carries out the reaction GTP + AMP = GDP + ADP. The enzyme catalyses CMP + ATP = CDP + ADP. It catalyses the reaction GTP + CMP = CDP + GDP. The catalysed reaction is dAMP + ATP = dADP + ADP. It carries out the reaction dCMP + ATP = dCDP + ADP. The enzyme catalyses a 2'-deoxyribonucleoside 5'-diphosphate + ATP = a 2'-deoxyribonucleoside 5'-triphosphate + ADP. It catalyses the reaction a ribonucleoside 5'-diphosphate + ATP = a ribonucleoside 5'-triphosphate + ADP. The catalysed reaction is GDP + ATP = GTP + ADP. It carries out the reaction CDP + GTP = CTP + GDP. The enzyme catalyses CDP + ATP = CTP + ADP. It catalyses the reaction UDP + ATP = UTP + ADP. The catalysed reaction is GTP + UDP = UTP + GDP. It carries out the reaction dADP + GTP = dATP + GDP. The enzyme catalyses dCDP + GTP = dCTP + GDP. It catalyses the reaction dCDP + ATP = dCTP + ADP. The catalysed reaction is dGDP + ATP = dGTP + ADP. It carries out the reaction dTDP + GTP = dTTP + GDP. The enzyme catalyses dTDP + ATP = dTTP + ADP. Broad-specificity mitochondrial nucleoside phosphate kinase involved in cellular nucleotide homeostasis by catalyzing nucleoside-phosphate interconversions. Similar to other adenylate kinases, preferentially catalyzes the phosphorylation of the nucleoside monophosphate AMP with ATP as phosphate donor to produce ADP. Phosphorylates only AMP when using GTP as phosphate donor. In vitro, can also catalyze the phosphorylation of CMP, dAMP and dCMP and use GTP as an alternate phosphate donor. Moreover, exhibits a diphosphate kinase activity, producing ATP, CTP, GTP, UTP, TTP, dATP, dCTP and dGTP from the corresponding diphosphate substrates with either ATP or GTP as phosphate donors. Plays a role in controlling cellular ATP levels by regulating phosphorylation and activation of the energy sensor protein kinase AMPK. Plays a protective role in the cellular response to oxidative stress. This Homo sapiens (Human) protein is Adenylate kinase 4, mitochondrial.